Consider the following 862-residue polypeptide: Short transient receptor potential channel 7 (862 aa).

Residues 1–21 (MLGSNTFKNMQRRHTTLREKG) are disordered. The Cytoplasmic portion of the chain corresponds to 1-351 (MLGSNTFKNM…GLRQQSIAVK (351 aa)). Positions 10–21 (MQRRHTTLREKG) are enriched in basic residues. At Thr-15 the chain carries Phosphothreonine; by PKG/PRKG1. ANK repeat units follow at residues 42–71 (PEEE…TLNF), 77–106 (MGQN…LARV), 108–134 (DALL…FAQG), and 163–192 (HDIT…RIER). Residues 352 to 372 (FLAVFGVSIGLPFLAIAYWIA) form a helical membrane-spanning segment. Over 373–383 (PCSKLGQTLRS) the chain is Extracellular. A helical membrane pass occupies residues 384-404 (PFMKFVAHAVSFTIFLGLLVV). The Cytoplasmic segment spans residues 405–465 (NASDRFEGVK…KEIWEEGPRE (61 aa)). A helical transmembrane segment spans residues 466–486 (YVLHLWNLLDFGMLSIFVASF). Residues 487 to 537 (TARFMAFLKASEAQLYVDQYVQDVTLHNVSLPPEVAYFTYARDKWWPSDPQ) are Extracellular-facing. Residue Asn-514 is glycosylated (N-linked (GlcNAc...) asparagine). The helical transmembrane segment at 538–558 (IISEGLYAIAVVLSFSRIAYI) threads the bilayer. Topologically, residues 559 to 581 (LPANESFGPLQISLGRTVKDIFK) are cytoplasmic. Residues 582–602 (FMVIFIMVFVAFMIGMFNLYS) form a helical membrane-spanning segment. Over 603-651 (YYRGAKYNPAFTTVEESFKTLFWSIFGLSEVISVVLKYDHKFIENIGYV) the chain is Extracellular. Residues 652 to 672 (LYGVYNVTMVVVLLNMLIAMI) traverse the membrane as a helical segment. Residues 673–862 (NNSYQEIEED…HLRVNQGKDI (190 aa)) lie on the Cytoplasmic side of the membrane.

Belongs to the transient receptor (TC 1.A.4) family. STrpC subfamily. TRPC7 sub-subfamily. Interacts with MX1 and RNF24. Interacts (via ANK-repeat domains) with PRKG1. Phosphorylation by PRKG1 at Thr-15 negatively regulates TRPC7 activity.

The protein resides in the cell membrane. The protein localises to the nucleus envelope. The catalysed reaction is Ca(2+)(in) = Ca(2+)(out). Its function is as follows. Forms a receptor-activated non-selective calcium permeant cation channel. Probably is operated by a phosphatidylinositol second messenger system activated by receptor tyrosine kinases or G-protein coupled receptors. Activated by diacylglycerol (DAG). May also be activated by intracellular calcium store depletion. The chain is Short transient receptor potential channel 7 (Trpc7) from Mus musculus (Mouse).